The chain runs to 549 residues: 65-kDa microtubule-associated protein 9 (549 aa).

Coiled-coil stretches lie at residues 36–123, 160–199, and 459–492; these read IEIE…ERKI, SLRKLEELHRELYTLQEQKRNRVKQIQDNIRTLESLCSVL, and GNRLLSMLEEYTELREEKEQERRRKRDLKKHQGQ. The segment at 474–549 is disordered; the sequence is EEKEQERRRK…SFSTPLSRHG (76 aa). Basic residues predominate over residues 481–490; that stretch reads RRKRDLKKHQ. A phosphoserine mark is found at S501 and S546. Positions 514–549 are enriched in polar residues; it reads VSTNKRFVSSPHTPQTDSPHSAKSNQSFSTPLSRHG.

Belongs to the MAP65/ASE1 family. In terms of assembly, forms dimer. Binds to microtubules (MT).

Its subcellular location is the nucleus. The protein resides in the cytoplasm. The protein localises to the cytoskeleton. It is found in the spindle pole. This chain is 65-kDa microtubule-associated protein 9 (MAP65-9), found in Arabidopsis thaliana (Mouse-ear cress).